The sequence spans 36 residues: MSDIN-like toxin proprotein 10 (36 aa).

The propeptide occupies 1–10 (MSDINATRLP). The cyclopeptide (Gly-Pro) cross-link spans 11 to 19 (GAYPPVPMP). The propeptide occupies 20-36 (CVGDADNFTLTRGENLC).

Belongs to the MSDIN fungal toxin family. In terms of processing, processed by the macrocyclase-peptidase enzyme POPB to yield a toxic cyclic nonapeptide. POPB first removes 10 residues from the N-terminus. Conformational trapping of the remaining peptide forces the enzyme to release this intermediate rather than proceed to macrocyclization. The enzyme rebinds the remaining peptide in a different conformation and catalyzes macrocyclization of the N-terminal 9 residues.

In terms of biological role, probable toxin that belongs to the MSDIN-like toxin family responsible for a large number of food poisoning cases and deaths. In Amanita bisporigera (Destroying angel), this protein is MSDIN-like toxin proprotein 10.